A 1006-amino-acid chain; its full sequence is Unconventional myosin-Id (1006 aa).

At A2 the chain carries N-acetylalanine. The 687-residue stretch at F9–A695 folds into the Myosin motor domain. G102–T109 is an ATP binding site. The residue at position 200 (S200) is a Phosphoserine. Y536 is modified (phosphotyrosine). Residues M572 to D594 form an actin-binding region. IQ domains lie at V699–K719 and T721–H741. The TH1 domain occupies G812–G1005.

This sequence belongs to the TRAFAC class myosin-kinesin ATPase superfamily. Myosin family. Interacts (via the two IQ motifs) with calmodulin. Binds an additional calmodulin chain via a third, C-terminal region. Interacts with F-actin. In terms of tissue distribution, detected in enterocytes at the intestinal brush border membrane. Detected at the tip of intestinal microvilli (at protein level).

The protein resides in the cytoplasm. It is found in the perikaryon. The protein localises to the cell projection. It localises to the dendrite. Its subcellular location is the early endosome. The protein resides in the cell cortex. It is found in the basolateral cell membrane. Unconventional myosin that functions as actin-based motor protein with ATPase activity. Plays a role in endosomal protein trafficking, and especially in the transfer of cargo proteins from early to recycling endosomes. Required for normal planar cell polarity in ciliated tracheal cells, for normal rotational polarity of cilia, and for coordinated, unidirectional ciliary movement in the trachea. Required for normal, polarized cilia organization in brain ependymal epithelial cells. In Mus musculus (Mouse), this protein is Unconventional myosin-Id.